The sequence spans 147 residues: MSTISAKPAEVVHEWFVIDATDKVLGRVASEVALRLRGKHKAIYTPHVDTGDFIVIINAARIKVTGTKSLDKVYYRHSGYPGGITAVNFRDMQARHPGRALEKAVKGMLPKGPLGYAMIKKLKVYGGPEHPHSAQQPKVLEIQGAAR.

The segment at 127-147 (GPEHPHSAQQPKVLEIQGAAR) is disordered.

The protein belongs to the universal ribosomal protein uL13 family. In terms of assembly, part of the 50S ribosomal subunit.

This protein is one of the early assembly proteins of the 50S ribosomal subunit, although it is not seen to bind rRNA by itself. It is important during the early stages of 50S assembly. This chain is Large ribosomal subunit protein uL13, found in Verminephrobacter eiseniae (strain EF01-2).